A 461-amino-acid polypeptide reads, in one-letter code: Coagulation factor IX (461 aa).

An N-terminal signal peptide occupies residues 1–28; that stretch reads MQRVNMIMAESPGLITICLLGYLLSAEC. A propeptide spanning residues 29-46 is cleaved from the precursor; it reads TVFLDHENANKILNRPKR. Ca(2+)-binding residues include tyrosine 47, asparagine 48, glutamate 53, glutamate 54, glutamate 61, glutamate 63, glutamate 66, glutamate 67, glutamate 72, glutamate 73, and glutamate 76. The 46-residue stretch at 47-92 folds into the Gla domain; the sequence is YNSGKLEEFVQGNLERECMEEKCSFEEAREVFENTERTTEFWKQYV. 11 positions are modified to 4-carboxyglutamate: glutamate 53, glutamate 54, glutamate 61, glutamate 63, glutamate 66, glutamate 67, glutamate 72, glutamate 73, glutamate 76, glutamate 79, and glutamate 82. Position 61 (glutamate 61) interacts with Mg(2+). A disulfide bond links cysteine 64 and cysteine 69. Glutamate 66 serves as a coordination point for Mg(2+). Residue glutamate 72 participates in Mg(2+) binding. Position 76 (glutamate 76) interacts with Mg(2+). Ca(2+) is bound at residue glutamate 82. Glutamate 82 provides a ligand contact to Mg(2+). An O-linked (GalNAc...) threonine glycan is attached at threonine 85. Residues glutamate 86, aspartate 93, glycine 94, and glutamine 96 each coordinate Ca(2+). A 4-carboxyglutamate modification is found at glutamate 86. Mg(2+) is bound at residue glutamate 86. Positions 93-129 constitute an EGF-like 1; calcium-binding domain; the sequence is DGDQCESNPCLNGGSCKDDINSYECWCPFGFEGKNCE. 10 disulfides stabilise this stretch: cysteine 97/cysteine 108, cysteine 102/cysteine 117, cysteine 119/cysteine 128, cysteine 134/cysteine 145, cysteine 141/cysteine 155, cysteine 157/cysteine 170, cysteine 178/cysteine 335, cysteine 252/cysteine 268, cysteine 382/cysteine 396, and cysteine 407/cysteine 435. The O-linked (Glc...) serine glycan is linked to serine 99. Serine 107 carries O-linked (Fuc...) serine glycosylation. Ca(2+)-binding residues include aspartate 110 and aspartate 111. Position 110 is a (3R)-3-hydroxyaspartate (aspartate 110). Phosphoserine is present on serine 114. One can recognise an EGF-like 2 domain in the interval 130-171; it reads LDVTCNIKNGRCEQFCKNSADNKVVCSCTEGYRLAENQKSCE. Positions 192–226 are cleaved as a propeptide — activation peptide; sequence AETVFPDVDYVNSTEAETILDNITQSTQSFNDFTR. Tyrosine 201 bears the Sulfotyrosine mark. Serine 204 bears the Phosphoserine mark. The residue at position 205 (threonine 205) is a Phosphothreonine; alternate. Threonine 205 is a glycosylation site (O-linked (GalNAc...) threonine; alternate). N-linked (GlcNAc...) asparagine glycosylation is present at asparagine 213. O-linked (GalNAc...) threonine glycosylation is found at threonine 215 and threonine 225. The 233-residue stretch at 227 to 459 folds into the Peptidase S1 domain; that stretch reads VVGGEDAKPG…YVNWIKEKTK (233 aa). Histidine 267 serves as the catalytic Charge relay system. Ca(2+) is bound by residues glutamate 281, asparagine 283, glutamate 286, glutamate 288, and glutamate 291. Catalysis depends on aspartate 315, which acts as the Charge relay system. Serine 411 serves as the catalytic Charge relay system.

This sequence belongs to the peptidase S1 family. In terms of assembly, heterodimer of a light chain and a heavy chain; disulfide-linked. Interacts (inactive and activated) with F11 (activated) in calcium-dependent manner. Interacts with SERPINC1. Activated by factor XIa, which excises the activation peptide. The propeptide can also be removed by snake venom protease. In terms of processing, the iron and 2-oxoglutarate dependent 3-hydroxylation of aspartate and asparagine is (R) stereospecific within EGF domains. Activated by coagulation factor VIIa-tissue factor (F7-F3) complex in calcium-dependent manner. Post-translationally, predominantly O-glucosylated at Ser-99 by POGLUT1 in vitro.

The protein localises to the secreted. It carries out the reaction Selective cleavage of Arg-|-Ile bond in factor X to form factor Xa.. Functionally, factor IX is a vitamin K-dependent plasma protein that participates in the intrinsic pathway of blood coagulation by converting factor X to its active form in the presence of Ca(2+) ions, phospholipids, and factor VIIIa. In Pan troglodytes (Chimpanzee), this protein is Coagulation factor IX (F9).